The following is a 417-amino-acid chain: MVSILQLQTRTEASPASSASAAATRIFAVRRQQQEQEGEEEEEEFEFQERMDLSGAQGELPIPMHASAAASPFAGMGAHGGAGGGHVVELHRHEHVGNNGQAMAMASPPPTNVAVAAEQEGSPVAGKKRGGMAVVGGGGGVAVKYRECLKNHAAAIGGNATDGCGEFMPSGEEGSLEALKCSACGCHRNFHRKEADDLDADSCAAALRAAAGRHHHLLGPALPHHHHKNGGGLLVAGGDPYGAAYAAARALPPPPPPPPHGHHHHHQIIMPLNMIHTSESDEMDVSGGGGGVGRGGGSSSSSKKRFRTKFTAEQKARMLEFAERVGWRLQKLDDAMVHHFCQEIGVKRRVLKVWMHNNKHNLAKKPLPSSPPPPPQIPPMSMPPSPPPPQIPPMSMPPSPPPMPMPMPPSPPQLKLE.

Polar residues predominate over residues 1–12 (MVSILQLQTRTE). Disordered regions lie at residues 1-22 (MVSI…ASAA) and 31-50 (RQQQ…FQER). Residues 13–22 (ASPASSASAA) are compositionally biased toward low complexity. Residues 36-46 (QEGEEEEEEFE) are compositionally biased toward acidic residues. Residues 145–194 (YRECLKNHAAAIGGNATDGCGEFMPSGEEGSLEALKCSACGCHRNFHRKE) form a ZF-HD dimerization-type; degenerate zinc finger. Disordered stretches follow at residues 281-309 (DEMD…FRTK) and 361-417 (NLAK…LKLE). Positions 286–298 (SGGGGGVGRGGGS) are enriched in gly residues. A DNA-binding region (homeobox) is located at residues 303–366 (KKRFRTKFTA…NNKHNLAKKP (64 aa)). Pro residues predominate over residues 368 to 417 (PSSPPPPPQIPPMSMPPSPPPPQIPPMSMPPSPPPMPMPMPPSPPQLKLE).

As to quaternary structure, homo- and heterodimer with other ZFHD proteins.

It localises to the nucleus. In terms of biological role, putative transcription factor. This is Zinc-finger homeodomain protein 4 (ZHD4) from Oryza sativa subsp. japonica (Rice).